A 685-amino-acid chain; its full sequence is E3 ubiquitin ligase Rnf157 (685 aa).

G2 carries the N-myristoyl glycine lipid modification. The RING-type zinc finger occupies 276–315 (ECVVCLSDVRDTLILPCRHLCLCNTCADTLRYQANNCPIC). Positions 329 to 332 (RKKL) match the D-box 1 motif. 3 disordered regions span residues 339–361 (SFNP…ENIP), 433–584 (LSKS…AGEQ), and 650–672 (LGGR…EASA). Over residues 434-443 (SKSISQNSSV) the composition is skewed to low complexity. Over residues 478–537 (ESENLTLSSSGAVDQSSCTGTPLSSTISSPEDPASSSLAQSVMSMASSQISTDTVSSMSG) the composition is skewed to polar residues. The span at 552–561 (PSPRAASRAP) shows a compositional bias: low complexity. The D-box 2 motif lies at 657 to 660 (ARPR).

Interacts with APBB1. Interacts with CHD1; CHD1-binding controls RNF157 stability. Also interacts with ATRN, MEGF8, TECR, MSI2, PLRG1, BYSL, MTERF3, PSMA1, MRPS18B, PRPF4, FASTKD2, SLC25A1, SMU1, CNOT9, MRPS2, MAGT1, FXR2, EMD, PSMD8, HDAC1, RAN, HSD17B12, TXNDC5 and MRPL19.

It is found in the cytoplasm. The enzyme catalyses S-ubiquitinyl-[E2 ubiquitin-conjugating enzyme]-L-cysteine + [acceptor protein]-L-lysine = [E2 ubiquitin-conjugating enzyme]-L-cysteine + N(6)-ubiquitinyl-[acceptor protein]-L-lysine.. Its function is as follows. E3 ubiquitin ligase that ubiquitinates APBB1 for its degradation by the proteasome and thus prevents apoptosis and promotes survival of neurons. Has a dual role in neurons as it is also required for dendrite growth and maintenance for which its ligase activity is not critical. May act as a scaffold molecule to regulate this process. Acts as a downstream effector of the interconnected PI3K and MAPK signaling pathways and thus participates in the regulation of the cell cycle. This Mus musculus (Mouse) protein is E3 ubiquitin ligase Rnf157 (Rnf157).